Consider the following 454-residue polypeptide: Response regulator PleD (454 aa).

Response regulatory domains lie at R4–T120 and R155–I269. The Mg(2+) site is built by D9, D10, D53, and M55. D53 is modified (4-aspartylphosphate). A GGDEF domain is found at D319–A454. Substrate-binding residues include N335 and D344. The Proton acceptor role is filled by E370.

As to quaternary structure, homodimer. Inactive monomer in solution. Phosphorylated by PleC and DivJ. Phosphorylation stimulates cyclase activity.

It localises to the cytoplasm. It catalyses the reaction 2 GTP = 3',3'-c-di-GMP + 2 diphosphate. Its pathway is purine metabolism; 3',5'-cyclic di-GMP biosynthesis. Allosterically inhibited by the product c-di-GMP. Response regulator that is part of a signal transduction pathway controlling cell differentiation in the swarmer-to-stalked cell transition. Its function is as follows. Catalyzes the condensation of two GTP molecules to the cyclic dinucleotide di-GMP (c-di-GMP), which acts as a secondary messenger. The protein is Response regulator PleD (pleD) of Caulobacter vibrioides (strain ATCC 19089 / CIP 103742 / CB 15) (Caulobacter crescentus).